We begin with the raw amino-acid sequence, 278 residues long: Sulfur carrier protein FdhD (278 aa).

Cys121 (cysteine persulfide intermediate) is an active-site residue. 260–265 (FCKPGR) contributes to the Mo-bis(molybdopterin guanine dinucleotide) binding site.

The protein belongs to the FdhD family.

The protein resides in the cytoplasm. Functionally, required for formate dehydrogenase (FDH) activity. Acts as a sulfur carrier protein that transfers sulfur from IscS to the molybdenum cofactor prior to its insertion into FDH. In Salmonella schwarzengrund (strain CVM19633), this protein is Sulfur carrier protein FdhD.